Here is an 815-residue protein sequence, read N- to C-terminus: uncharacterized protein (815 aa).

The segment at residues 31–57 is a DNA-binding region (zn(2)-C6 fungal-type); it reads CDMCRRKKIKCDGLRPCKNCKAGKLEC. A helical membrane pass occupies residues 560–580; that stretch reads YWTTVYCGFSTIVTLIFAALL. Disordered regions lie at residues 646-668 and 769-792; these read ESNVPINNGPQQSIDKESNSNTQ and DPDVSDGKSRESSSLNNSTPFNPT. Positions 780–792 are enriched in polar residues; the sequence is SSSLNNSTPFNPT.

It is found in the cytoplasm. Its subcellular location is the nucleus membrane. This is an uncharacterized protein from Schizosaccharomyces pombe (strain 972 / ATCC 24843) (Fission yeast).